The chain runs to 291 residues: MLQGSLVALITPMNQDGSIHYEQLRDLIDWHIENGTDGIVAVGTTGESATLSVEEHTAVIEAVVKHVAKRVPVIAGTGANNTVEAIALSQAAEKAGADYTLSVVPYYNKPSQEGIYQHFKTIAEATSIPMIIYNVPGRTVVSMTNDTILRLAEIPNIVGVKEASGNIGSNIELINRAPEGFVVLSGDDHTALPFMLCGGHGVITVAANAAPKLFADMCRAALQGDIALARELNDRLIPIYDTMFCEPSPAAPKWAVSALGRCEPHVRLPLVPLTENGQAKVRAALKASGQL.

Residue threonine 45 coordinates pyruvate. The Proton donor/acceptor role is filled by tyrosine 133. Lysine 161 acts as the Schiff-base intermediate with substrate in catalysis. A pyruvate-binding site is contributed by isoleucine 203.

This sequence belongs to the DapA family. In terms of assembly, homotetramer.

The protein localises to the cytoplasm. The catalysed reaction is L-aspartate 4-semialdehyde + pyruvate = (2S,4S)-4-hydroxy-2,3,4,5-tetrahydrodipicolinate + H2O + H(+). It functions in the pathway amino-acid biosynthesis; L-lysine biosynthesis via DAP pathway; (S)-tetrahydrodipicolinate from L-aspartate: step 3/4. Is allosterically feedback inhibited by lysine; the N.meningitidis enzyme is significantly more sensitive to lysine than the E.coli enzyme. Shows substrate inhibition by (S)-ASA, with a Ki of 1.7 mM. Catalyzes the condensation of (S)-aspartate-beta-semialdehyde [(S)-ASA] and pyruvate to 4-hydroxy-tetrahydrodipicolinate (HTPA). The chain is 4-hydroxy-tetrahydrodipicolinate synthase from Neisseria meningitidis serogroup B (strain ATCC BAA-335 / MC58).